The following is a 137-amino-acid chain: MKTPPNQEKNNEKISLLFSSQRLTIDVHPSSVYHIVLSSNNADRHQVTLSFTARSRMMPLTRARPFGNHSSMFRMFLDAMVILAVASGVSLPPQLPGRRSHNASTPGAKKPGKDHGAMVSEFPANGVITPVYFPLRW.

The chain crosses the membrane as a helical span at residues 75–91; that stretch reads MFLDAMVILAVASGVSL. A disordered region spans residues 93–116; the sequence is PQLPGRRSHNASTPGAKKPGKDHG.

Its subcellular location is the membrane. This is an uncharacterized protein from Saccharomyces cerevisiae (strain ATCC 204508 / S288c) (Baker's yeast).